The sequence spans 136 residues: Psoriasis susceptibility 1 candidate gene 2 protein homolog (136 aa).

The first 22 residues, 1–22 (MILNWKLLGILVLCLHTRGISG), serve as a signal peptide directing secretion. The segment at 20 to 136 (ISGSEDHPSH…DLDPPREEYR (117 aa)) is disordered. Residues 23-33 (SEDHPSHPPAE) show a composition bias toward basic and acidic residues. 2 stretches are compositionally biased toward pro residues: residues 44 to 74 (PQGPPVPGDPWPGAPPLFEDPPPPHPSPPWR) and 83 to 116 (PPEPPRTDPPQPPRPDDPWPAGPQPPENPWPPAP). The segment covering 117-136 (EVDHRPQEEPDLDPPREEYR) has biased composition (basic and acidic residues).

The protein localises to the secreted. The polypeptide is Psoriasis susceptibility 1 candidate gene 2 protein homolog (PSORS1C2) (Pan troglodytes (Chimpanzee)).